The following is a 202-amino-acid chain: ATP-dependent Clp protease proteolytic subunit (202 aa).

Catalysis depends on S106, which acts as the Nucleophile. The active site involves H131.

Belongs to the peptidase S14 family. In terms of assembly, fourteen ClpP subunits assemble into 2 heptameric rings which stack back to back to give a disk-like structure with a central cavity, resembling the structure of eukaryotic proteasomes.

Its subcellular location is the cytoplasm. The catalysed reaction is Hydrolysis of proteins to small peptides in the presence of ATP and magnesium. alpha-casein is the usual test substrate. In the absence of ATP, only oligopeptides shorter than five residues are hydrolyzed (such as succinyl-Leu-Tyr-|-NHMec, and Leu-Tyr-Leu-|-Tyr-Trp, in which cleavage of the -Tyr-|-Leu- and -Tyr-|-Trp bonds also occurs).. In terms of biological role, cleaves peptides in various proteins in a process that requires ATP hydrolysis. Has a chymotrypsin-like activity. Plays a major role in the degradation of misfolded proteins. This chain is ATP-dependent Clp protease proteolytic subunit, found in Acidovorax sp. (strain JS42).